Consider the following 55-residue polypeptide: Large ribosomal subunit protein bL33 (55 aa).

It belongs to the bacterial ribosomal protein bL33 family.

The chain is Large ribosomal subunit protein bL33 from Xanthobacter autotrophicus (strain ATCC BAA-1158 / Py2).